The chain runs to 232 residues: 7-cyano-7-deazaguanine synthase 2 (232 aa).

9–19 (FSGGQDSTTCL) is a binding site for ATP. 4 residues coordinate Zn(2+): cysteine 189, cysteine 198, cysteine 201, and cysteine 204.

This sequence belongs to the QueC family. Zn(2+) is required as a cofactor.

The catalysed reaction is 7-carboxy-7-deazaguanine + NH4(+) + ATP = 7-cyano-7-deazaguanine + ADP + phosphate + H2O + H(+). It functions in the pathway purine metabolism; 7-cyano-7-deazaguanine biosynthesis. Catalyzes the ATP-dependent conversion of 7-carboxy-7-deazaguanine (CDG) to 7-cyano-7-deazaguanine (preQ(0)). This chain is 7-cyano-7-deazaguanine synthase 2, found in Pseudomonas fluorescens (strain ATCC BAA-477 / NRRL B-23932 / Pf-5).